The primary structure comprises 490 residues: Aspartyl/glutamyl-tRNA(Asn/Gln) amidotransferase subunit B (490 aa).

Belongs to the GatB/GatE family. GatB subfamily. In terms of assembly, heterotrimer of A, B and C subunits.

The catalysed reaction is L-glutamyl-tRNA(Gln) + L-glutamine + ATP + H2O = L-glutaminyl-tRNA(Gln) + L-glutamate + ADP + phosphate + H(+). It carries out the reaction L-aspartyl-tRNA(Asn) + L-glutamine + ATP + H2O = L-asparaginyl-tRNA(Asn) + L-glutamate + ADP + phosphate + 2 H(+). Functionally, allows the formation of correctly charged Asn-tRNA(Asn) or Gln-tRNA(Gln) through the transamidation of misacylated Asp-tRNA(Asn) or Glu-tRNA(Gln) in organisms which lack either or both of asparaginyl-tRNA or glutaminyl-tRNA synthetases. The reaction takes place in the presence of glutamine and ATP through an activated phospho-Asp-tRNA(Asn) or phospho-Glu-tRNA(Gln). This Synechococcus sp. (strain JA-3-3Ab) (Cyanobacteria bacterium Yellowstone A-Prime) protein is Aspartyl/glutamyl-tRNA(Asn/Gln) amidotransferase subunit B.